Reading from the N-terminus, the 403-residue chain is GPI mannosyltransferase 1 (403 aa).

Over M1–E4 the chain is Cytoplasmic. A helical transmembrane segment spans residues E5–Y25. Residues Q26–G78 are Lumenal-facing. Residues W79 to M99 traverse the membrane as a helical segment. Residues K100–R110 lie on the Cytoplasmic side of the membrane. A helical transmembrane segment spans residues A111–G131. N132 is a topological domain (lumenal). Residues A133–Q149 form a helical membrane-spanning segment. Topologically, residues K150–Y160 are cytoplasmic. A helical membrane pass occupies residues G161 to I181. Residues Y182–Q193 lie on the Lumenal side of the membrane. The helical transmembrane segment at L194–A214 threads the bilayer. Topologically, residues M215–A266 are cytoplasmic. The helical transmembrane segment at F267–F287 threads the bilayer. At D288–S310 the chain is on the lumenal side. Residues Q311–W331 form a helical membrane-spanning segment. The Cytoplasmic portion of the chain corresponds to K332 to G334. The helical transmembrane segment at L335–L355 threads the bilayer. Over E356–N361 the chain is Lumenal. A helical transmembrane segment spans residues V362–L382. Over G383 to N403 the chain is Cytoplasmic.

Belongs to the PIGM family.

It localises to the endoplasmic reticulum membrane. Its pathway is glycolipid biosynthesis; glycosylphosphatidylinositol-anchor biosynthesis. Functionally, mannosyltransferase involved in glycosylphosphatidylinositol-anchor biosynthesis. Transfers the first alpha-1,4-mannose to GlcN-acyl-PI during GPI precursor assembly. Required for cell wall integrity. This Saccharomyces cerevisiae (strain ATCC 204508 / S288c) (Baker's yeast) protein is GPI mannosyltransferase 1 (GPI14).